The sequence spans 350 residues: D-alanine--D-alanine ligase (350 aa).

The 202-residue stretch at lysine 143 to leucine 344 folds into the ATP-grasp domain. ATP is bound at residue isoleucine 172 to glutamate 227. 3 residues coordinate Mg(2+): aspartate 298, glutamate 311, and asparagine 313.

Belongs to the D-alanine--D-alanine ligase family. Requires Mg(2+) as cofactor. Mn(2+) serves as cofactor.

The protein localises to the cytoplasm. It carries out the reaction 2 D-alanine + ATP = D-alanyl-D-alanine + ADP + phosphate + H(+). It participates in cell wall biogenesis; peptidoglycan biosynthesis. In terms of biological role, cell wall formation. This is D-alanine--D-alanine ligase from Wigglesworthia glossinidia brevipalpis.